Reading from the N-terminus, the 67-residue chain is Coiled-coil domain-containing protein 179 (67 aa).

2 disordered regions span residues 1–32 (MCLR…RQSV) and 47–67 (RKLG…ILWT). The stretch at 27–53 (STRQSVEKRINYMQNLQKEKRKLGKRF) forms a coiled coil.

In Mus musculus (Mouse), this protein is Coiled-coil domain-containing protein 179 (Ccdc179).